Consider the following 226-residue polypeptide: Cytidylate kinase (226 aa).

Gly-9–Thr-17 contributes to the ATP binding site.

The protein belongs to the cytidylate kinase family. Type 1 subfamily.

It is found in the cytoplasm. It catalyses the reaction CMP + ATP = CDP + ADP. The catalysed reaction is dCMP + ATP = dCDP + ADP. The polypeptide is Cytidylate kinase (Clostridium tetani (strain Massachusetts / E88)).